A 335-amino-acid polypeptide reads, in one-letter code: MWATLPLLCAGAWLLGVPVCGAAELCVNSLEKFHFKSWMSKHRKTYSTEEYHHRLQTFASNWRKINAHNNGNHTFKMALNQFSDMSFAEIKHKYLWSEPQNCSATKSNYLRGTGPYPPSVDWRKKGNFVSPVKNQGACGSCWTFSTTGALESAIAIATGKMLSLAEQQLVDCAQDFNNHGCQGGLPSQAFEYILYNKGIMGEDTYPYQGKDGYCKFQPGKAIGFVKDVANITIYDEEAMVEAVALYNPVSFAFEVTQDFMMYRTGIYSSTSCHKTPDKVNHAVLAVGYGEKNGIPYWIVKNSWGPQWGMNGYFLIERGKNMCGLAACASYPIPLV.

The N-terminal stretch at 1–22 (MWATLPLLCAGAWLLGVPVCGA) is a signal peptide. The propeptide at 23 to 97 (AELCVNSLEK…AEIKHKYLWS (75 aa)) is activation peptide. N-linked (GlcNAc...) asparagine glycosylation is present at asparagine 101. 4 disulfide bridges follow: cysteine 102-cysteine 327, cysteine 138-cysteine 181, cysteine 172-cysteine 214, and cysteine 272-cysteine 322. A propeptide spanning residues 106–115 (KSNYLRGTGP) is cleaved from the precursor. Cysteine 141 is a catalytic residue. Residue asparagine 230 is glycosylated (N-linked (GlcNAc...) asparagine). Residues histidine 281 and asparagine 301 contribute to the active site.

This sequence belongs to the peptidase C1 family. In terms of assembly, composed of a mini chain and a large chain. The large chain may be split into heavy and light chain. All chains are held together by disulfide bonds.

Its subcellular location is the lysosome. It carries out the reaction Hydrolysis of proteins, acting as an aminopeptidase (notably, cleaving Arg-|-Xaa bonds) as well as an endopeptidase.. Functionally, important for the overall degradation of proteins in lysosomes. The polypeptide is Pro-cathepsin H (CTSH) (Homo sapiens (Human)).